The following is a 423-amino-acid chain: MWLSVALLTLLDGALAAPARQHSGAFDMPLTWTPFGFTTDAIQIGTPPQPLVCFVDWTWIGQYAFTPRCHGGSQGTYACLQHGQPLYNETESRTFANQSVLYPERTWNPNHFFFYNDLSVGFGSDIERVGPDHQARVTLQLADMHFQLDMVYPFGGVYGLSPVFKSDNASTQSPFYQMWQQGVYRSPLVSFVYCHNSTFDQPTPRRELCHGKDGLQTLGGPSPVLSLSDKNNSSPILWYDNIVFPPVNEIEFVYQPAVYNYWALRLTRHLIGDEEQALNTSIGGNPGAIFDHASYGRGVPMSENSYRRLIEITGGRPVVLDANVAPNNGNQSFVSVDCEKVSSFPNVKYVFEGHDRVWEVTPANYVERREVDGKEVCVLNVRTLGEGDWIIGNFGETFAKDKVVLFDFDKLRVGLADVPAAAY.

The N-terminal stretch at 1–16 (MWLSVALLTLLDGALA) is a signal peptide. A Peptidase A1 domain is found at 38-416 (TTDAIQIGTP…DFDKLRVGLA (379 aa)). Aspartate 56 is an active-site residue. N-linked (GlcNAc...) asparagine glycans are attached at residues asparagine 88, asparagine 97, asparagine 168, asparagine 196, asparagine 231, and asparagine 279. The active site involves aspartate 291. Asparagine 330 carries an N-linked (GlcNAc...) asparagine glycan. The cysteines at positions 338 and 377 are disulfide-linked.

It belongs to the peptidase A1 family.

Its pathway is secondary metabolite biosynthesis. Its function is as follows. Aspartic protease-like protein; part of the gene cluster that mediates the biosynthesis of pyranterreones, a family of antioxidative compounds. The first step of pyranonigrins biosynthesis is performed by the hybrid PKS-NRPS synthetase pytA that condenses 4 malonyl-CoA units ato the acetyl starter unit by the modular PKS of pytA. The acyl chain is then connected to an L-serine through the amide bond by the modular NRPS of pytA. A tetramic acid is formed and released from the PKS-NRPS pytA to give pyranterreone 5 with the help of the thioesterase pytI. Pyranterreone 5 could be methylated by pytC to afford pyranterreone 6. Both pyranterreones 5 and 6 are subsequently oxidized by the FAD-linked oxidoreductase pytB and the cytochrome P450 monooxygenase pytD to form the fused gamma-pyrone core, resulting in pyranterreones 7 and 11, respectively. The hydroxy group at C-8 of pyranterreones 7 and 11 are dehydrated by the aspartyl protease pytH to form a delta-7 double bond to give pyranterreones 3 and 1, 2 accordingly. The exo-methylene of pyranterreone 3 could be reduced into a pendant methyl by reductase pytE to provide pyranterreone 4, also known as cordylactam. Pyranterreone 4 can be reconverted to pyranterreone 3 through pytB-catalyzed dehydrogenation or further oxidized to pyranterreones 9 and 10. The sequence is that of Aspartic protease-like protein pytH from Aspergillus terreus (strain NIH 2624 / FGSC A1156).